Reading from the N-terminus, the 313-residue chain is Beta-ketoacyl-[acyl-carrier-protein] synthase III (313 aa).

Residues Cys-112 and His-238 contribute to the active site. An ACP-binding region spans residues Gln-239–Arg-243. The active site involves Asn-268.

It belongs to the thiolase-like superfamily. FabH family. As to quaternary structure, homodimer.

It localises to the cytoplasm. It catalyses the reaction malonyl-[ACP] + acetyl-CoA + H(+) = 3-oxobutanoyl-[ACP] + CO2 + CoA. Its pathway is lipid metabolism; fatty acid biosynthesis. Catalyzes the condensation reaction of fatty acid synthesis by the addition to an acyl acceptor of two carbons from malonyl-ACP. Catalyzes the first condensation reaction which initiates fatty acid synthesis and may therefore play a role in governing the total rate of fatty acid production. Possesses both acetoacetyl-ACP synthase and acetyl transacylase activities. Its substrate specificity determines the biosynthesis of branched-chain and/or straight-chain of fatty acids. In Staphylococcus haemolyticus (strain JCSC1435), this protein is Beta-ketoacyl-[acyl-carrier-protein] synthase III.